A 267-amino-acid chain; its full sequence is Putative phosphoenolpyruvate synthase regulatory protein (267 aa).

Position 147 to 154 (147 to 154 (GVSRSGKT)) interacts with ADP.

This sequence belongs to the pyruvate, phosphate/water dikinase regulatory protein family. PSRP subfamily.

The enzyme catalyses [pyruvate, water dikinase] + ADP = [pyruvate, water dikinase]-phosphate + AMP + H(+). The catalysed reaction is [pyruvate, water dikinase]-phosphate + phosphate + H(+) = [pyruvate, water dikinase] + diphosphate. In terms of biological role, bifunctional serine/threonine kinase and phosphorylase involved in the regulation of the phosphoenolpyruvate synthase (PEPS) by catalyzing its phosphorylation/dephosphorylation. The sequence is that of Putative phosphoenolpyruvate synthase regulatory protein from Cupriavidus necator (strain ATCC 17699 / DSM 428 / KCTC 22496 / NCIMB 10442 / H16 / Stanier 337) (Ralstonia eutropha).